The primary structure comprises 539 residues: UDP-N-acetylmuramate--L-alanine ligase (539 aa).

165–171 (GTHGKTT) contributes to the ATP binding site.

It belongs to the MurCDEF family.

Its subcellular location is the cytoplasm. It carries out the reaction UDP-N-acetyl-alpha-D-muramate + L-alanine + ATP = UDP-N-acetyl-alpha-D-muramoyl-L-alanine + ADP + phosphate + H(+). Its pathway is cell wall biogenesis; peptidoglycan biosynthesis. Cell wall formation. This chain is UDP-N-acetylmuramate--L-alanine ligase, found in Trichodesmium erythraeum (strain IMS101).